The sequence spans 129 residues: uncharacterized protein (129 aa).

Disordered stretches follow at residues 1 to 57 (MGGG…LPNH) and 87 to 129 (PVSS…WLWW). A compositionally biased stretch (basic and acidic residues) spans 10 to 20 (SGEERREKRSG). The segment covering 87 to 99 (PVSSSPSRSPSSS) has biased composition (low complexity).

This is an uncharacterized protein from Homo sapiens (Human).